Consider the following 215-residue polypeptide: Orotate phosphoribosyltransferase (215 aa).

A 5-phospho-alpha-D-ribose 1-diphosphate-binding site is contributed by lysine 26. Residue 34–35 coordinates orotate; the sequence is FF. Residues 72–73, arginine 99, lysine 100, lysine 103, histidine 105, and 124–132 each bind 5-phospho-alpha-D-ribose 1-diphosphate; these read YK and DDVITAGTA. Positions 128 and 156 each coordinate orotate.

This sequence belongs to the purine/pyrimidine phosphoribosyltransferase family. PyrE subfamily. Homodimer. The cofactor is Mg(2+).

It catalyses the reaction orotidine 5'-phosphate + diphosphate = orotate + 5-phospho-alpha-D-ribose 1-diphosphate. It participates in pyrimidine metabolism; UMP biosynthesis via de novo pathway; UMP from orotate: step 1/2. Its function is as follows. Catalyzes the transfer of a ribosyl phosphate group from 5-phosphoribose 1-diphosphate to orotate, leading to the formation of orotidine monophosphate (OMP). The polypeptide is Orotate phosphoribosyltransferase (Cellvibrio japonicus (strain Ueda107) (Pseudomonas fluorescens subsp. cellulosa)).